The chain runs to 336 residues: Probable G-protein coupled receptor 82 (336 aa).

Residues 1–11 (MNNNTTCIQPS) are Extracellular-facing. N-linked (GlcNAc...) asparagine glycans are attached at residues Asn-3 and Asn-4. The chain crosses the membrane as a helical span at residues 12-32 (MISSMALPIIYILLCIVGVFG). Residues 33–55 (NTLSQWIFLTKIGKKTSTHIYLS) lie on the Cytoplasmic side of the membrane. A helical transmembrane segment spans residues 56 to 76 (HLVTANLLVCSAMPFMSIYFL). Residues 77–92 (KGFQWEYQSAQCRVVN) are Extracellular-facing. A helical transmembrane segment spans residues 93–115 (FLGTLSMHASMFVSLLILSWIAI). Residues 116-156 (SRYATLMQKDSSQETTSCYEKIFYGHLLKKFRQPNFARKLC) lie on the Cytoplasmic side of the membrane. A helical transmembrane segment spans residues 157-177 (IYIWGVVLGIIIPVTVYYSVI). Topologically, residues 178–197 (EATEGEESLCYNRQMELGAM) are extracellular. The helical transmembrane segment at 198–218 (ISQIAGLIGTTFIGFSFLVVL) threads the bilayer. Topologically, residues 219 to 251 (TSYYSFVSHLRKIRTCTSIMEKDLTYSSVKRHL) are cytoplasmic. Residues 252 to 272 (LVIQILLIVCFLPYSIFKPIF) traverse the membrane as a helical segment. Topologically, residues 273-336 (YVLHQRDNCQ…SNSAHMQSYG (64 aa)) are extracellular.

This sequence belongs to the G-protein coupled receptor 1 family.

It localises to the cell membrane. Its function is as follows. Orphan receptor. This chain is Probable G-protein coupled receptor 82 (GPR82), found in Homo sapiens (Human).